The sequence spans 434 residues: D-amino acid dehydrogenase (434 aa).

3-17 (VLVLGSGVIGTASAY) is a binding site for FAD.

This sequence belongs to the DadA oxidoreductase family. The cofactor is FAD.

The enzyme catalyses a D-alpha-amino acid + A + H2O = a 2-oxocarboxylate + AH2 + NH4(+). It participates in amino-acid degradation; D-alanine degradation; NH(3) and pyruvate from D-alanine: step 1/1. In terms of biological role, oxidative deamination of D-amino acids. In Pseudomonas putida (strain GB-1), this protein is D-amino acid dehydrogenase.